We begin with the raw amino-acid sequence, 202 residues long: Lymphotoxin-alpha (202 aa).

A signal peptide spans 1–33 (MTPLGRLHLLRVLSTPPVFLLGLLLALPLGAQG). The region spanning 60–202 (PAAHLVGYPS…STVFFGAFAL (143 aa)) is the THD domain. Asn93 is a glycosylation site (N-linked (GlcNAc...) asparagine).

It belongs to the tumor necrosis factor family. As to quaternary structure, homotrimer, and heterotrimer of either two LTB and one LTA subunits or (less prevalent) two LTA and one LTB subunits. Interacts with TNFRSF14.

It is found in the secreted. Its subcellular location is the membrane. Its function is as follows. Cytokine that in its homotrimeric form binds to TNFRSF1A/TNFR1, TNFRSF1B/TNFBR and TNFRSF14/HVEM. In its heterotrimeric form with LTB binds to TNFRSF3/LTBR. Lymphotoxin is produced by lymphocytes and is cytotoxic for a wide range of tumor cells in vitro and in vivo. The polypeptide is Lymphotoxin-alpha (Lta) (Rattus norvegicus (Rat)).